A 384-amino-acid polypeptide reads, in one-letter code: Gibberellin 3-beta-dioxygenase 1 (384 aa).

Positions 225-327 constitute a Fe2OG dioxygenase domain; that stretch reads TLTSTIHLNM…RISMPYFLGP (103 aa). The Fe cation site is built by His-250, Asp-252, and His-308. 2-oxoglutarate contacts are provided by Arg-318 and Ser-320.

The protein belongs to the iron/ascorbate-dependent oxidoreductase family. L-ascorbate is required as a cofactor. The cofactor is Fe(2+). Expressed in unopened flowers.

The catalysed reaction is gibberellin A20 + 2-oxoglutarate + O2 = gibberellin A1 + succinate + CO2. It functions in the pathway plant hormone biosynthesis; gibberellin biosynthesis. Catalyzes the 3-beta-hydroxylation of the inactive gibberellin precursors, leading to the formation of bioactive gibberellins. In vitro, converts the precursors GA20, GA5, GA44 and GA9 to the corresponding 3-beta-hydroxylated bioactive products GA1, GA3, GA38 and GA4, respectively. Involved in the production of bioactive GA for vegetative growth and development. May possess 2,3-desaturase activity, catalyzing the conversion of GA9 to 2,3-dehydro-GA9, and GA20 to GA5 (2,3-dehydro GA20). May possess 2-beta-hydroxylase activity, catalyzing the conversion of GA1 and GA4 to the corresponding 2-beta-hydroxylated products GA8 and GA34, respectively. The polypeptide is Gibberellin 3-beta-dioxygenase 1 (Oryza sativa subsp. japonica (Rice)).